We begin with the raw amino-acid sequence, 243 residues long: Probable 6-phosphogluconolactonase (243 aa).

The protein belongs to the glucosamine/galactosamine-6-phosphate isomerase family. 6-phosphogluconolactonase subfamily.

The catalysed reaction is 6-phospho-D-glucono-1,5-lactone + H2O = 6-phospho-D-gluconate + H(+). It participates in carbohydrate degradation; pentose phosphate pathway; D-ribulose 5-phosphate from D-glucose 6-phosphate (oxidative stage): step 2/3. In terms of biological role, hydrolysis of 6-phosphogluconolactone to 6-phosphogluconate. This is Probable 6-phosphogluconolactonase from Drosophila melanogaster (Fruit fly).